A 365-amino-acid polypeptide reads, in one-letter code: Flagellar P-ring protein (365 aa).

The N-terminal stretch at 1–20 (MKLPHFFVLAALVLSGAAHA) is a signal peptide.

This sequence belongs to the FlgI family. As to quaternary structure, the basal body constitutes a major portion of the flagellar organelle and consists of four rings (L,P,S, and M) mounted on a central rod.

It is found in the periplasm. The protein localises to the bacterial flagellum basal body. Functionally, assembles around the rod to form the L-ring and probably protects the motor/basal body from shearing forces during rotation. The chain is Flagellar P-ring protein from Thiobacillus denitrificans (strain ATCC 25259 / T1).